The sequence spans 157 residues: SsrA-binding protein (157 aa).

Belongs to the SmpB family.

The protein localises to the cytoplasm. Functionally, required for rescue of stalled ribosomes mediated by trans-translation. Binds to transfer-messenger RNA (tmRNA), required for stable association of tmRNA with ribosomes. tmRNA and SmpB together mimic tRNA shape, replacing the anticodon stem-loop with SmpB. tmRNA is encoded by the ssrA gene; the 2 termini fold to resemble tRNA(Ala) and it encodes a 'tag peptide', a short internal open reading frame. During trans-translation Ala-aminoacylated tmRNA acts like a tRNA, entering the A-site of stalled ribosomes, displacing the stalled mRNA. The ribosome then switches to translate the ORF on the tmRNA; the nascent peptide is terminated with the 'tag peptide' encoded by the tmRNA and targeted for degradation. The ribosome is freed to recommence translation, which seems to be the essential function of trans-translation. This Clostridium kluyveri (strain NBRC 12016) protein is SsrA-binding protein.